Consider the following 207-residue polypeptide: Ribonuclease HII (207 aa).

One can recognise an RNase H type-2 domain in the interval 12–205 (GLVVGIDEVG…IRNMIEAEAH (194 aa)). D18, E19, and D114 together coordinate a divalent metal cation.

This sequence belongs to the RNase HII family. Mn(2+) serves as cofactor. Mg(2+) is required as a cofactor.

The protein localises to the cytoplasm. The catalysed reaction is Endonucleolytic cleavage to 5'-phosphomonoester.. In terms of biological role, endonuclease that specifically degrades the RNA of RNA-DNA hybrids. This Gluconobacter oxydans (strain 621H) (Gluconobacter suboxydans) protein is Ribonuclease HII.